A 131-amino-acid polypeptide reads, in one-letter code: Profilin-11 (131 aa).

Residues C13 and C115 are joined by a disulfide bond. Positions 81–97 match the Involved in PIP2 interaction motif; that stretch reads AVIRGKKGSGGITVKKT. T111 bears the Phosphothreonine mark.

The protein belongs to the profilin family. As to quaternary structure, occurs in many kinds of cells as a complex with monomeric actin in a 1:1 ratio. Phosphorylated by MAP kinases.

It is found in the cytoplasm. The protein resides in the cytoskeleton. Functionally, binds to actin and affects the structure of the cytoskeleton. At high concentrations, profilin prevents the polymerization of actin, whereas it enhances it at low concentrations. The chain is Profilin-11 from Zea mays (Maize).